A 731-amino-acid polypeptide reads, in one-letter code: MSRRSQRLTRYSQDDNDGGSSSSGASSVAGSQGTVFKDSPLRTLKRKSSNMKHLSPAPQLGPSSDSHTSYYSESVVRESYIGSPRAVSLARSALLDDHLHSEPYWSGDLRGRRRRGTGGSESSKANGLTAESKASEDFFGSSSGYSSEDDLAGYTDSDQHSSGSRLRSAASRAGSFVWTLVTFPGRLFGLLYWWIGTTWYRLTTAASLLDVFVLTRSRHFSLNLKSFLWFLLLLLLLTGLTYGAWHFYPLGLQTLQPAVVSWWAAKESRKQPEVWESRDASQHFQAEQRVLSRVHSLERRLEALAADFSSNWQKEAIRLERLELRQGAAGHGGGSSLSHEDALSLLEGLVSRREATLKEDLRRDTVAHIQEELATLRAEHHQDSEDLFKKIVQASQESEARVQQLKTEWKSMTQEAFQESSVKELGRLEAQLASLRQELAALTLKQNSVADEVGLLPQKIQAARADVESQFPDWIRQFLLGDRGARSGLLQRDEMHAQLQELENKILTKMAEMQGKSAREAAASLGQILQKEGIVGVTEEQVHRIVKQALQRYSEDRIGMVDYALESGGASVISTRCSETYETKTALLSLFGIPLWYHSQSPRVILQPDVHPGNCWAFQGPQGFAVVRLSARIRPTAVTLEHVPKALSPNSTISSAPKDFAIFGFDEDLQQEGTLLGTFAYDQDGEPIQTFYFQASKMATYQVVELRILTNWGHPEYTCIYRFRVHGEPAH.

Disordered regions lie at residues 1 to 69 and 106 to 142; these read MSRR…SHTS and SGDL…FGSS. The LMNA-binding stretch occupies residues 1 to 128; that stretch reads MSRRSQRLTR…GSESSKANGL (128 aa). Residues 1–226 lie on the Nuclear side of the membrane; the sequence is MSRRSQRLTR…SRHFSLNLKS (226 aa). A Phosphoserine modification is found at S12. The span at 18-33 shows a compositional bias: low complexity; sequence GGSSSSGASSVAGSQG. 2 positions are modified to phosphoserine: S39 and S55. T117 is modified (phosphothreonine). Residues S120, S123, and S147 each carry the phosphoserine modification. The chain crosses the membrane as a helical span at residues 227–247; that stretch reads FLWFLLLLLLLTGLTYGAWHF. At 248-731 the chain is on the perinuclear space side; sequence YPLGLQTLQP…RFRVHGEPAH (484 aa). Coiled coils occupy residues 396-452 and 486-519; these read QESE…VADE and RSGL…KSAR. The sufficient for interaction with SYNE1 and SYNE2 stretch occupies residues 521 to 731; sequence AAASLGQILQ…RFRVHGEPAH (211 aa). Residues 569–730 form the SUN domain; that stretch reads GASVISTRCS…YRFRVHGEPA (162 aa). N-linked (GlcNAc...) asparagine glycosylation occurs at N650.

As to quaternary structure, core component of the LINC complex which is composed of inner nuclear membrane SUN domain-containing proteins coupled to outer nuclear membrane KASH domain-containing nesprins. SUN and KASH domain-containing proteins seem to bind each other promiscuously; however, differentially expression of LINC complex constituents is giving rise to specific assemblies. At least SUN1/2-containing core LINC complexes are proposed to be hexameric composed of three protomers of each KASH and SUN domain-containing protein. Interacts with SYNE2; the SUN2:SYNE2/KASH2 LINC complex is a heterohexamer; the homotrimeric cloverleave-like conformation of the SUN domain is a prerequisite for LINC complex formation in which three separate SYNE2/KASH2 peptides bind at the interface of adjacent SUN domains. Component of a probable SUN2:KASH5 LINC complex. Interacts with SYNE1 and SYNE3; probably forming respective LINC complexes. Interacts with A-type lamin. Interaction with lamins B1 and C is hardly detectable. Interacts with EMD. Interacts with RAB5A. Interacts with TMEM43 and TMEM201. Interacts with IRAG2. In terms of processing, the disulfide bond with SYNE2 is required for stability of the SUN2:SYNE2/KASH2 LINC complex under tensile forces though not required for the interaction. The disulfide bond is proposed to be conserved in LINC complexes involved in force transmission. Highly expressed in heart, placenta and muscle.

It localises to the nucleus inner membrane. The protein localises to the nucleus envelope. It is found in the endosome membrane. Its function is as follows. As a component of the LINC (LInker of Nucleoskeleton and Cytoskeleton) complex, involved in the connection between the nuclear lamina and the cytoskeleton. The nucleocytoplasmic interactions established by the LINC complex play an important role in the transmission of mechanical forces across the nuclear envelope and in nuclear movement and positioning. Specifically, SYNE2 and SUN2 assemble in arrays of transmembrane actin-associated nuclear (TAN) lines which are bound to F-actin cables and couple the nucleus to retrograde actin flow during actin-dependent nuclear movement. Required for interkinetic nuclear migration (INM) and essential for nucleokinesis and centrosome-nucleus coupling during radial neuronal migration in the cerebral cortex and during glial migration. Required for nuclear migration in retinal photoreceptor progenitors implicating association with cytoplasmic dynein-dynactin and kinesin motor complexes, and probably B-type lamins; SUN1 and SUN2 seem to act redundantly. The SUN1/2:KASH5 LINC complex couples telomeres to microtubules during meiosis; SUN1 and SUN2 seem to act at least partial redundantly. Anchors chromosome movement in the prophase of meiosis and is involved in selective gene expression of coding and non-coding RNAs needed for gametogenesis. Required for telomere attachment to nuclear envelope and gametogenesis. May also function on endocytic vesicles as a receptor for Rab5-GDP and participate in the activation of Rab5. The chain is SUN domain-containing protein 2 from Mus musculus (Mouse).